Here is a 1090-residue protein sequence, read N- to C-terminus: Protein unc-13 homolog D (1090 aa).

One can recognise a C2 1 domain in the interval 92–239 (EPEEHQQTLQ…FKEARKDKGQ (148 aa)). Residues aspartate 127 and aspartate 133 each contribute to the Ca(2+) site. Position 150 is a phosphoserine (serine 150). The Ca(2+) site is built by aspartate 206 and aspartate 208. The segment at 240–543 (DDFLGNVVLR…AKRVQDHTTV (304 aa)) is interaction with RAB27A. In terms of domain architecture, MHD1 spans 557-677 (FQLYISLKEL…RLALVYCSLI (121 aa)). Residues 788-895 (EDAILPLMKF…ASSRELIRKY (108 aa)) form the MHD2 domain. A C2 2 domain is found at 910 to 1035 (ELGAVTVKAS…PGLSGSEEPG (126 aa)). 6 residues coordinate Ca(2+): leucine 940, aspartate 941, aspartate 947, aspartate 1005, aspartate 1007, and aspartate 1013. The tract at residues 1026 to 1048 (PGLSGSEEPGEVPQTRLPLTYPA) is disordered.

It belongs to the unc-13 family. In terms of assembly, interacts with DOC2A. Interacts with RAB27A. Interacts with RHOG; the interaction increases RhoG affinity to the membrane lipids, targets UNC13D to membrane lipids and facilitates cytotoxic granule (CG) docking to the plasma membrane. Ca(2+) serves as cofactor. As to expression, expressed at high levels in spleen, thymus and leukocytes. Also expressed in lung and placenta, and at very low levels in brain, heart, skeletal muscle and kidney. Expressed in cytotoxic T-lymphocytes (CTL) and mast cells.

It is found in the cytoplasm. It localises to the membrane. The protein resides in the late endosome. The protein localises to the recycling endosome. Its subcellular location is the lysosome. In terms of biological role, plays a role in cytotoxic granule exocytosis in lymphocytes. Required for both granule maturation and granule docking and priming at the immunologic synapse. Regulates assembly of recycling and late endosomal structures, leading to the formation of an endosomal exocytic compartment that fuses with perforin-containing granules at the immunologic synapse and licences them for exocytosis. Regulates Ca(2+)-dependent secretory lysosome exocytosis in mast cells. This chain is Protein unc-13 homolog D (UNC13D), found in Homo sapiens (Human).